Consider the following 296-residue polypeptide: Protein RarD (296 aa).

Residues 1-11 (MDAKQTRQGVL) are Cytoplasmic-facing. A helical membrane pass occupies residues 12–34 (LALAAYFIWGIAPAYFKLIYYVP). In terms of domain architecture, EamA spans 18-145 (FIWGIAPAYF…AICGVLVQLW (128 aa)). At 35 to 37 (ADE) the chain is on the periplasmic side. A helical transmembrane segment spans residues 38 to 60 (ILTHRVIWSFFFMVVLMSICRQW). The Cytoplasmic segment spans residues 61–72 (SYLKTLIQTPQK). Residues 73–95 (IFMLAVSAVLIGGNWLLFIWAVN) traverse the membrane as a helical segment. The Periplasmic segment spans residues 96 to 99 (NHHM). A helical transmembrane segment spans residues 100-122 (LEASLGYFINPLVNIVLGMIFLG). Residues 123–128 (ERFRRM) are Cytoplasmic-facing. Residues 129 to 146 (QWLAVILAICGVLVQLWT) traverse the membrane as a helical segment. Over 147 to 149 (FGS) the chain is Periplasmic. A helical membrane pass occupies residues 150–167 (LPIIALGLAFSFAFYGLV). The Cytoplasmic portion of the chain corresponds to 168–179 (RKKIAVEAQTGM). Residues 180–197 (LIETMWLLPVAAIYLFAI) form a helical membrane-spanning segment. Residues 198–211 (ADSSTSHMGQNPMS) lie on the Periplasmic side of the membrane. The chain crosses the membrane as a helical span at residues 212 to 234 (LNLLLIAAGIVTTVPLLCFTAAA). Over 235–238 (TRLR) the chain is Cytoplasmic. The helical transmembrane segment at 239–261 (LSTLGFFQYIGPTLMFLLAVTFY) threads the bilayer. At 262 to 270 (GEKPGADKM) the chain is on the periplasmic side. A helical membrane pass occupies residues 271 to 290 (VTFAFIWVALAIFVMDAIYT). Topologically, residues 291 to 296 (QRRTSK) are cytoplasmic.

It belongs to the EamA transporter family.

It is found in the cell inner membrane. The sequence is that of Protein RarD (rarD) from Escherichia coli (strain K12).